A 216-amino-acid polypeptide reads, in one-letter code: Probable transaldolase (216 aa).

Lys-84 functions as the Schiff-base intermediate with substrate in the catalytic mechanism.

It belongs to the transaldolase family. Type 3B subfamily.

Its subcellular location is the cytoplasm. The catalysed reaction is D-sedoheptulose 7-phosphate + D-glyceraldehyde 3-phosphate = D-erythrose 4-phosphate + beta-D-fructose 6-phosphate. It participates in carbohydrate degradation; pentose phosphate pathway; D-glyceraldehyde 3-phosphate and beta-D-fructose 6-phosphate from D-ribose 5-phosphate and D-xylulose 5-phosphate (non-oxidative stage): step 2/3. Transaldolase is important for the balance of metabolites in the pentose-phosphate pathway. This is Probable transaldolase from Exiguobacterium sp. (strain ATCC BAA-1283 / AT1b).